The sequence spans 520 residues: Lysine--tRNA ligase (520 aa).

Residues 1 to 21 form a disordered region; it reads MSDHLIPSIPTPAAAPAAAPA. A compositionally biased stretch (low complexity) spans 12-21; sequence PAAAPAAAPA. Residues glutamate 430 and glutamate 437 each coordinate Mg(2+).

Belongs to the class-II aminoacyl-tRNA synthetase family. In terms of assembly, homodimer. The cofactor is Mg(2+).

The protein localises to the cytoplasm. It catalyses the reaction tRNA(Lys) + L-lysine + ATP = L-lysyl-tRNA(Lys) + AMP + diphosphate. This is Lysine--tRNA ligase from Variovorax paradoxus (strain S110).